The chain runs to 739 residues: Trehalose phosphorylase (739 aa).

The propeptide occupies 1 to 26 (MSTPHHQFESKSSTAIRRRLSSSVSS). The tract at residues 1–28 (MSTPHHQFESKSSTAIRRRLSSSVSSKQ) is disordered.

Belongs to the glycosyltransferase group 1 family. Glycosyltransferase 4 subfamily. As to quaternary structure, homodimer.

It catalyses the reaction alpha,alpha-trehalose + phosphate = alpha-D-glucose + alpha-D-glucose 1-phosphate. Its function is as follows. Reversibly catalyzes the synthesis and degradation of trehalose from glucose and alpha-D-glucose 1-phosphate. The equilibrium lies in the direction of trehalose synthesis. The sequence is that of Trehalose phosphorylase from Pleurotus pulmonarius (Indian oyster mushroom).